The primary structure comprises 238 residues: Ribosomal RNA small subunit methyltransferase G (238 aa).

S-adenosyl-L-methionine contacts are provided by residues glycine 99, leucine 104, 122 to 124 (DAT), 150 to 151 (VE), and arginine 164.

Belongs to the methyltransferase superfamily. RNA methyltransferase RsmG family.

The protein localises to the cytoplasm. In terms of biological role, specifically methylates the N7 position of a guanine in 16S rRNA. The protein is Ribosomal RNA small subunit methyltransferase G of Chlorobium luteolum (strain DSM 273 / BCRC 81028 / 2530) (Pelodictyon luteolum).